We begin with the raw amino-acid sequence, 188 residues long: Protein GrpE (188 aa).

Over residues 1–10 the composition is skewed to polar residues; sequence MPDPTQNPNV. The interval 1 to 35 is disordered; that stretch reads MPDPTQNPNVTPELEQHAAPEAAAEAAPESSADVM. Low complexity predominate over residues 19 to 32; the sequence is APEAAAEAAPESSA.

This sequence belongs to the GrpE family. Homodimer.

It is found in the cytoplasm. Functionally, participates actively in the response to hyperosmotic and heat shock by preventing the aggregation of stress-denatured proteins, in association with DnaK and GrpE. It is the nucleotide exchange factor for DnaK and may function as a thermosensor. Unfolded proteins bind initially to DnaJ; upon interaction with the DnaJ-bound protein, DnaK hydrolyzes its bound ATP, resulting in the formation of a stable complex. GrpE releases ADP from DnaK; ATP binding to DnaK triggers the release of the substrate protein, thus completing the reaction cycle. Several rounds of ATP-dependent interactions between DnaJ, DnaK and GrpE are required for fully efficient folding. The chain is Protein GrpE from Azoarcus sp. (strain BH72).